A 43-amino-acid chain; its full sequence is METATVFSIFISCLLLSLTGYSLYTAFGEPSAELRDPFEEHED.

Residues 5-27 traverse the membrane as a helical segment; the sequence is TVFSIFISCLLLSLTGYSLYTAF.

Belongs to the PsbN family.

It localises to the plastid. The protein localises to the chloroplast thylakoid membrane. May play a role in photosystem I and II biogenesis. In Chlorokybus atmophyticus (Soil alga), this protein is Protein PsbN.